The following is a 902-amino-acid chain: Cytosolic 10-formyltetrahydrofolate dehydrogenase (902 aa).

Positions 1-310 (MKIAVIGQSL…LASNFFKGAA (310 aa)) are hydrolase domain. S9 is modified (phosphoserine). K38 bears the N6-succinyllysine mark. 88–90 (QFI) serves as a coordination point for (6R)-10-formyltetrahydrofolate. The Proton donor role is filled by H106. D142 is a (6R)-10-formyltetrahydrofolate binding site. Positions 318-395 (EAELVTAEAV…DFIQLLVRKL (78 aa)) constitute a Carrier domain. Residue S354 is modified to O-(pantetheine 4'-phosphoryl)serine. Residues 417–902 (TVRMPHQLFI…LRVKTVTFEY (486 aa)) are aldehyde dehydrogenase domain. NADP(+) contacts are provided by residues 571–573 (IPW) and 597–600 (KPAQ). Phosphoserine is present on residues S629 and S631. NADP(+) is bound by residues 630-635 (GSLVGQ) and 650-651 (GS). An N6-succinyllysine modification is found at K660. E673 (proton acceptor) is an active-site residue. Position 673-674 (673-674 (EL)) interacts with NADP(+). Catalysis depends on C707, which acts as the Proton donor. Residue K757 participates in NADP(+) binding. Residue K767 is modified to N6-succinyllysine. NADP(+) is bound at residue 804–806 (ESF). S825 is modified (phosphoserine). K882 carries the N6-acetyllysine modification.

This sequence in the N-terminal section; belongs to the GART family. It in the C-terminal section; belongs to the aldehyde dehydrogenase family. ALDH1L subfamily. As to quaternary structure, homotetramer. Post-translationally, phosphopantetheinylation at Ser-354 by AASDHPPT is required for the formyltetrahydrofolate dehydrogenase activity. Highly expressed in liver, pancreas and kidney.

It localises to the cytoplasm. It is found in the cytosol. The catalysed reaction is (6R)-10-formyltetrahydrofolate + NADP(+) + H2O = (6S)-5,6,7,8-tetrahydrofolate + CO2 + NADPH + H(+). In terms of biological role, cytosolic 10-formyltetrahydrofolate dehydrogenase that catalyzes the NADP(+)-dependent conversion of 10-formyltetrahydrofolate to tetrahydrofolate and carbon dioxide. May also have an NADP(+)-dependent aldehyde dehydrogenase activity towards formaldehyde, acetaldehyde, propionaldehyde, and benzaldehyde. The polypeptide is Cytosolic 10-formyltetrahydrofolate dehydrogenase (Homo sapiens (Human)).